A 264-amino-acid polypeptide reads, in one-letter code: MKPTTIASLQKCKQDKKRFATITAYDYSFAKLFADEGLNVMLVGDSLGMTVQGHDSTLPVTVADIAYHTASVRRGAPNCLLLADLPFMAYATPEQAFENAATVMRAGANMVKIEGGEWLVETVKMLTERAVPVCGHLGLTPQSVNIFGGYKVQGRGDEAGDQLLSDALALEAAGAQLLVLECVPVELAKRITEALAIPVIGIGAGNVTDGQILVMHDAFGITGGHIPKFAKNFLAETGDIRAAVRQYMAEVESGVYPGEEHSFH.

The Mg(2+) site is built by D45 and D84. 3-methyl-2-oxobutanoate is bound by residues 45-46, D84, and K112; that span reads DS. Residue E114 coordinates Mg(2+). Catalysis depends on E181, which acts as the Proton acceptor.

It belongs to the PanB family. In terms of assembly, homodecamer; pentamer of dimers. Mg(2+) is required as a cofactor.

The protein resides in the cytoplasm. The catalysed reaction is 3-methyl-2-oxobutanoate + (6R)-5,10-methylene-5,6,7,8-tetrahydrofolate + H2O = 2-dehydropantoate + (6S)-5,6,7,8-tetrahydrofolate. It functions in the pathway cofactor biosynthesis; (R)-pantothenate biosynthesis; (R)-pantoate from 3-methyl-2-oxobutanoate: step 1/2. Its function is as follows. Catalyzes the reversible reaction in which hydroxymethyl group from 5,10-methylenetetrahydrofolate is transferred onto alpha-ketoisovalerate to form ketopantoate. This chain is 3-methyl-2-oxobutanoate hydroxymethyltransferase, found in Shigella boydii serotype 18 (strain CDC 3083-94 / BS512).